The primary structure comprises 300 residues: MSDLTELTAEDKANVLVEALPWLQKWHGALVVLKYGGNAMVDEDLKRAFAEDVVFLRTAGLRPVVVHGGGPQISTMLDRLQIPSEFRGGLRVTTPEAMDVVRMVLTGQVGRELVGLLNAHGPLAVGLSGEDAGLLRATRRHAVVDGEPVDVGLVGDVVGVDPRAVVDLLAAGRIPVISTIAPEVDADGNPLHGQVLNVNADTAASAIAVALEAQKFVVMTDVAGLYRDWPNRDSLVREITAGDLAALLPSLESGMVPKMEACLRAVRGGVPRATVIDGRQAHSVLLEVFTTSGNGTMVVP.

Substrate is bound by residues 69-70 (GG), arginine 91, and asparagine 197.

Belongs to the acetylglutamate kinase family. ArgB subfamily.

The protein localises to the cytoplasm. The catalysed reaction is N-acetyl-L-glutamate + ATP = N-acetyl-L-glutamyl 5-phosphate + ADP. It functions in the pathway amino-acid biosynthesis; L-arginine biosynthesis; N(2)-acetyl-L-ornithine from L-glutamate: step 2/4. Its function is as follows. Catalyzes the ATP-dependent phosphorylation of N-acetyl-L-glutamate. This chain is Acetylglutamate kinase, found in Kineococcus radiotolerans (strain ATCC BAA-149 / DSM 14245 / SRS30216).